Here is a 341-residue protein sequence, read N- to C-terminus: Methionine import ATP-binding protein MetN 3 (341 aa).

The 240-residue stretch at 2-241 folds into the ABC transporter domain; that stretch reads ILLENVKKIY…PKQDITKRFV (240 aa). 38–45 is an ATP binding site; the sequence is GYSGAGKS.

The protein belongs to the ABC transporter superfamily. Methionine importer (TC 3.A.1.24) family. As to quaternary structure, the complex is composed of two ATP-binding proteins (MetN), two transmembrane proteins (MetI) and a solute-binding protein (MetQ).

Its subcellular location is the cell membrane. It carries out the reaction L-methionine(out) + ATP + H2O = L-methionine(in) + ADP + phosphate + H(+). The enzyme catalyses D-methionine(out) + ATP + H2O = D-methionine(in) + ADP + phosphate + H(+). Its function is as follows. Part of the ABC transporter complex MetNIQ involved in methionine import. Responsible for energy coupling to the transport system. The polypeptide is Methionine import ATP-binding protein MetN 3 (Bacillus cereus (strain ATCC 14579 / DSM 31 / CCUG 7414 / JCM 2152 / NBRC 15305 / NCIMB 9373 / NCTC 2599 / NRRL B-3711)).